Reading from the N-terminus, the 252-residue chain is ATP synthase subunit a (252 aa).

The next 6 membrane-spanning stretches (helical) occupy residues 29 to 49, 87 to 107, 117 to 137, 146 to 166, 196 to 216, and 219 to 239; these read FTNV…FLFI, FFPL…IGLF, IMIT…CGFY, LFVP…IEVI, FIVS…LPLI, and VAIT…FTVL.

It belongs to the ATPase A chain family. In terms of assembly, F-type ATPases have 2 components, CF(1) - the catalytic core - and CF(0) - the membrane proton channel. CF(1) has five subunits: alpha(3), beta(3), gamma(1), delta(1), epsilon(1). CF(0) has three main subunits: a(1), b(2) and c(9-12). The alpha and beta chains form an alternating ring which encloses part of the gamma chain. CF(1) is attached to CF(0) by a central stalk formed by the gamma and epsilon chains, while a peripheral stalk is formed by the delta and b chains.

The protein resides in the cell inner membrane. In terms of biological role, key component of the proton channel; it plays a direct role in the translocation of protons across the membrane. The polypeptide is ATP synthase subunit a (Bartonella bacilliformis (strain ATCC 35685 / KC583 / Herrer 020/F12,63)).